The primary structure comprises 907 residues: Potassium channel AKT3 (907 aa).

At 1–75 the chain is on the cytoplasmic side; the sequence is MPTTKCAVPL…YDRRYELWNN (75 aa). The helical transmembrane segment at 76–96 threads the bilayer; it reads YLILLVVYSAWVTPFEFGFVP. Over 97–102 the chain is Extracellular; it reads EPAGAL. Residues 103–123 form a helical membrane-spanning segment; the sequence is AAADNAVNAFFAVDIVLTFFV. Over 124-146 the chain is Cytoplasmic; it reads AYTDPKTFLLQDDPRKIALRYIT. A helical membrane pass occupies residues 147–167; the sequence is TWFVLDVVATIPTELARRILP. Over 168-174 the chain is Extracellular; that stretch reads PDLRSYG. Residues 175 to 195 traverse the membrane as a helical; Voltage-sensor segment; the sequence is FFGILRLWRLHRVGILFARLE. Residues 196 to 209 lie on the Cytoplasmic side of the membrane; the sequence is KDRKFSYFWVRCVK. The helical transmembrane segment at 210-230 threads the bilayer; sequence LVCVTLFAVHCSACFYYLLAD. At 231 to 257 the chain is on the extracellular side; it reads RYPDPTNTWISAYMPNFHKASIWSRYV. An intramembrane region (pore-forming) is located at residues 258–277; it reads ASMYWSITTLSTVGYGDMHA. Over 278-288 the chain is Extracellular; that stretch reads ENTGEMVFTTT. Residues 289-309 form a helical membrane-spanning segment; sequence YMLFNLGLTAYIIGNMTNLVV. The Cytoplasmic portion of the chain corresponds to 310–907; that stretch reads HGTSRTRKFR…VPPENRSRNQ (598 aa). 388 to 512 serves as a coordination point for a nucleoside 3',5'-cyclic phosphate; sequence LFEGVSNDLI…TIVMNNLIQY (125 aa). 5 ANK repeats span residues 539 to 568, 572 to 601, 605 to 634, 636 to 665, and 670 to 699; these read DFPI…DPNE, YGRT…DSNS, EGRV…DLSG, DAAP…DVSG, and DGTT…DADA. 2 disordered regions span residues 726 to 779 and 801 to 824; these read ATRH…TPQR and GGYR…SSPP. Over residues 754-776 the composition is skewed to low complexity; the sequence is SSPSSSSRRGRTSSTSAASARST. Positions 803-812 are enriched in gly residues; it reads YRGGGGGGGA. The region spanning 827–907 is the KHA domain; that stretch reads RVAISCPESR…VPPENRSRNQ (81 aa).

Belongs to the potassium channel family. Plant (TC 1.A.1.4) subfamily.

The protein localises to the membrane. Functionally, probable inward-rectifying potassium channel. Assuming opened or closed conformations in response to the voltage difference across the membrane, the channel is activated by hyperpolarization. This is Potassium channel AKT3 from Oryza sativa subsp. japonica (Rice).